The sequence spans 889 residues: Coatomer subunit gamma-2 (889 aa).

HEAT repeat units follow at residues 67-102 (VEATEVFFATTKLFQSKDAGLRRMVYLMIKELSPSA), 103-140 (DEVIIVTSSLMKDMNSKTDMYRANAIRVLCRIIDSTLL), 289-326 (RELTPAITVLQLFLSSSKPVLRFAAVRTLNKVASTHPL), 328-360 (VTNCNIDMESLISDQNRSIATLAITTLLKTGNE), and 361-398 (SSVDRLMKQMTNFMSDIADEFKIVVVEAIRSLCLKFPL). The interval 596 to 617 (PLAEKKTTGKKPTGPASALSGP) is disordered.

Belongs to the COPG family. As to quaternary structure, oligomeric complex that consists of at least the alpha, beta, beta', gamma, delta, epsilon and zeta subunits.

The protein localises to the cytoplasm. The protein resides in the golgi apparatus membrane. Its subcellular location is the cytoplasmic vesicle. It localises to the COPI-coated vesicle membrane. Its function is as follows. The coatomer is a cytosolic protein complex that binds to dilysine motifs and reversibly associates with Golgi non-clathrin-coated vesicles, which further mediate biosynthetic protein transport from the ER, via the Golgi up to the trans Golgi network. Coatomer complex is required for budding from Golgi membranes, and is essential for the retrograde Golgi-to-ER transport of dilysine-tagged proteins. In Oryza sativa subsp. japonica (Rice), this protein is Coatomer subunit gamma-2.